The primary structure comprises 268 residues: Nickel import ATP-binding protein NikE (268 aa).

In terms of domain architecture, ABC transporter spans 4-252 (LNVSGLSHHY…SSDAGRVLQN (249 aa)). 45–52 (GRSGCGKS) lines the ATP pocket.

It belongs to the ABC transporter superfamily. Nickel importer (TC 3.A.1.5.3) family. The complex is composed of two ATP-binding proteins (NikD and NikE), two transmembrane proteins (NikB and NikC) and a solute-binding protein (NikA).

The protein resides in the cell inner membrane. It catalyses the reaction Ni(2+)(out) + ATP + H2O = Ni(2+)(in) + ADP + phosphate + H(+). Part of the ABC transporter complex NikABCDE involved in nickel import. Responsible for energy coupling to the transport system. In Shigella boydii serotype 4 (strain Sb227), this protein is Nickel import ATP-binding protein NikE.